The chain runs to 316 residues: Transaldolase (316 aa).

Lys-132 (schiff-base intermediate with substrate) is an active-site residue.

Belongs to the transaldolase family. Type 1 subfamily.

The protein resides in the cytoplasm. It carries out the reaction D-sedoheptulose 7-phosphate + D-glyceraldehyde 3-phosphate = D-erythrose 4-phosphate + beta-D-fructose 6-phosphate. It functions in the pathway carbohydrate degradation; pentose phosphate pathway; D-glyceraldehyde 3-phosphate and beta-D-fructose 6-phosphate from D-ribose 5-phosphate and D-xylulose 5-phosphate (non-oxidative stage): step 2/3. Functionally, transaldolase is important for the balance of metabolites in the pentose-phosphate pathway. This chain is Transaldolase, found in Vibrio cholerae serotype O1 (strain ATCC 39315 / El Tor Inaba N16961).